A 300-amino-acid polypeptide reads, in one-letter code: CDP-diacylglycerol--serine O-phosphatidyltransferase (300 aa).

6 consecutive transmembrane segments (helical) span residues 10-30 (AVNLQILPSSMTVLSICAGLT), 74-94 (IDSLADAVNFGVAPAVVLYAT), 95-115 (MLSTTPVGWVAVLLYPVCVVL), 135-155 (EFFVGMPAPAGAVSVIGLLAL), 162-182 (GWWTSTWFLCIWVTGTSMLLI), and 207-227 (LAIFAAAVVLAPYLLIWVIIL).

The protein belongs to the CDP-alcohol phosphatidyltransferase class-I family.

It localises to the cell membrane. It carries out the reaction a CDP-1,2-diacyl-sn-glycerol + L-serine = a 1,2-diacyl-sn-glycero-3-phospho-L-serine + CMP + H(+). The protein is CDP-diacylglycerol--serine O-phosphatidyltransferase (pssA) of Mycobacterium leprae (strain TN).